A 730-amino-acid polypeptide reads, in one-letter code: Jacalin-related lectin 5 (730 aa).

The Jacalin-type lectin 1 domain maps to 1-126 (MSWDDGKHTK…LNSIDAHFAP (126 aa)). The segment at 121 to 450 (DAHFAPAPPP…GNQWDDGTDH (330 aa)) is disordered. 4 stretches are compositionally biased toward low complexity: residues 138–153 (GASGIGSDSGSIGSAG), 168–179 (AGGSKPSSGSAG), 196–207 (AGGSKPSSGSAG), and 248–261 (TEKNAGGSKSSSGS). Over residues 275 to 307 (ETVSNIGDTESNAGGSKSNDGANNGASGIESNA) the composition is skewed to polar residues. Positions 314-323 (FGAGGTGGIG) are enriched in gly residues. A compositionally biased stretch (low complexity) spans 343-358 (DGASGIGSNDGSTGTN). 2 stretches are compositionally biased toward polar residues: residues 366–375 (DSNIEGTENN) and 388–416 (IGNSDGSTGTSPEGTESNADGTKTNTGGK). Low complexity predominate over residues 417-429 (ESNTGSESNTNSS). Jacalin-type lectin domains are found at residues 430 to 572 (PQKL…YFVP) and 584 to 727 (PNKV…YFIP).

This sequence belongs to the jacalin lectin family.

This chain is Jacalin-related lectin 5 (JAL5), found in Arabidopsis thaliana (Mouse-ear cress).